The following is a 68-amino-acid chain: Alpha/kappa-conotoxin-like pl14.2 (68 aa).

The N-terminal stretch at 1–27 (MPSVRSVTCCCLLWMMFSVQLVTPGSP) is a signal peptide. The propeptide occupies 28-39 (ATAQLSGQRTAR). 2 cysteine pairs are disulfide-bonded: Cys46–Cys61 and Cys50–Cys63. Arg64 carries the post-translational modification Arginine amide. The propeptide occupies 65–68 (GKRD).

This sequence belongs to the conotoxin J superfamily. In terms of tissue distribution, expressed by the venom duct.

The protein localises to the secreted. In terms of biological role, highly inhibits both nicotinic acetylcholine receptors (neuronal (alpha-3/beta-4) and muscular (alpha-1/beta-1/epsilon/delta) subtypes) and the voltage-gated potassium channel Kv1.6/KCNA6 subtype. This Conus planorbis (Planorbis cone) protein is Alpha/kappa-conotoxin-like pl14.2.